The chain runs to 156 residues: Small ribosomal subunit protein uS7 (156 aa).

It belongs to the universal ribosomal protein uS7 family. As to quaternary structure, part of the 30S ribosomal subunit. Contacts proteins S9 and S11.

In terms of biological role, one of the primary rRNA binding proteins, it binds directly to 16S rRNA where it nucleates assembly of the head domain of the 30S subunit. Is located at the subunit interface close to the decoding center, probably blocks exit of the E-site tRNA. The protein is Small ribosomal subunit protein uS7 of Shouchella clausii (strain KSM-K16) (Alkalihalobacillus clausii).